Here is a 277-residue protein sequence, read N- to C-terminus: Small ribosomal subunit protein uS2 (277 aa).

Basic and acidic residues-rich tracts occupy residues 227–256 (QARA…RTEA) and 267–277 (SEAKAEGNTEA). Residues 227 to 277 (QARAERQEAAAKEAAGDADKAPAEAERTEAPAEEAPAEAQSEAKAEGNTEA) form a disordered region.

This sequence belongs to the universal ribosomal protein uS2 family.

The protein is Small ribosomal subunit protein uS2 of Corynebacterium jeikeium (strain K411).